The primary structure comprises 1456 residues: CLIP-associating protein 1-B (1456 aa).

HEAT repeat units follow at residues Leu-68–Thr-87, Gln-88–Asn-124, and Leu-163–Glu-200. Positions Thr-237–Ala-296 are disordered. Low complexity predominate over residues Ala-284–Ala-296. The stretch at Thr-442–Thr-479 is one HEAT 4 repeat. Disordered stretches follow at residues Ser-547–Gly-728 and Gly-776–Tyr-796. Residues Ser-550–Leu-569 show a composition bias toward low complexity. Over residues Arg-573 to Arg-594 the composition is skewed to polar residues. 3 stretches are compositionally biased toward low complexity: residues Ala-603 to Ala-618, Gln-642 to Asp-656, and Val-665 to Gly-679. The segment covering Gln-711–Arg-721 has biased composition (polar residues). Positions Ser-785 to Tyr-796 are enriched in low complexity. The stretch at Gln-930–Pro-967 is one HEAT 5 repeat. 2 disordered regions span residues Leu-1037–Pro-1080 and Val-1121–Gly-1147. A compositionally biased stretch (low complexity) spans Lys-1038–Asn-1050. The span at Ser-1062–Ser-1074 shows a compositional bias: polar residues. Positions Val-1121 to Glu-1130 are enriched in basic and acidic residues. HEAT repeat units follow at residues Glu-1260–Ala-1297 and Gln-1378–Glu-1415.

This sequence belongs to the CLASP family. As to quaternary structure, interacts (via C-terminus) with clip1/clip-170, and cenpe.

Its subcellular location is the cytoplasm. The protein localises to the cytoskeleton. It localises to the microtubule organizing center. It is found in the centrosome. The protein resides in the chromosome. Its subcellular location is the centromere. The protein localises to the kinetochore. It localises to the spindle. It is found in the golgi apparatus. The protein resides in the trans-Golgi network. In terms of biological role, microtubule plus-end tracking protein that promotes the stabilization of dynamic microtubules during anaphase. Plays a crucial role in chromatin-induced microtubule formation. May also act at microtubule minus ends. May be involved in the nucleation of noncentrosomal microtubules originating from the trans-Golgi network (TGN). The polypeptide is CLIP-associating protein 1-B (Xenopus laevis (African clawed frog)).